The following is a 285-amino-acid chain: 2,3,4,5-tetrahydropyridine-2,6-dicarboxylate N-succinyltransferase (285 aa).

The protein belongs to the transferase hexapeptide repeat family.

It localises to the cytoplasm. It carries out the reaction (S)-2,3,4,5-tetrahydrodipicolinate + succinyl-CoA + H2O = (S)-2-succinylamino-6-oxoheptanedioate + CoA. It functions in the pathway amino-acid biosynthesis; L-lysine biosynthesis via DAP pathway; LL-2,6-diaminopimelate from (S)-tetrahydrodipicolinate (succinylase route): step 1/3. The sequence is that of 2,3,4,5-tetrahydropyridine-2,6-dicarboxylate N-succinyltransferase from Beijerinckia indica subsp. indica (strain ATCC 9039 / DSM 1715 / NCIMB 8712).